Consider the following 143-residue polypeptide: Sec-independent protein translocase protein TatB (143 aa).

The chain crosses the membrane as a helical span at residues 2–22 (FGNIGWGEFMVLLVAALVILG). Residues 97–143 (FDKPGSVSFDKSNPGTKAVSADPSTPTAPQNKPLAAGERPPIDLDAT) are disordered.

This sequence belongs to the TatB family. As to quaternary structure, the Tat system comprises two distinct complexes: a TatABC complex, containing multiple copies of TatA, TatB and TatC subunits, and a separate TatA complex, containing only TatA subunits. Substrates initially bind to the TatABC complex, which probably triggers association of the separate TatA complex to form the active translocon.

It is found in the cell membrane. Part of the twin-arginine translocation (Tat) system that transports large folded proteins containing a characteristic twin-arginine motif in their signal peptide across membranes. Together with TatC, TatB is part of a receptor directly interacting with Tat signal peptides. TatB may form an oligomeric binding site that transiently accommodates folded Tat precursor proteins before their translocation. The chain is Sec-independent protein translocase protein TatB from Rhodococcus opacus (strain B4).